The primary structure comprises 576 residues: Low-affinity glucose transporter HXT4 (576 aa).

A disordered region spans residues 1–56 (MSEEAAYQEDTAVQNTPADALSPVESDSNSALSTPSNKAERDDMKDFDENHEESNN). The Cytoplasmic portion of the chain corresponds to 1–66 (MSEEAAYQED…YVEIPKKPAS (66 aa)). Polar residues predominate over residues 25 to 37 (ESDSNSALSTPSN). A compositionally biased stretch (basic and acidic residues) spans 38–54 (KAERDDMKDFDENHEES). Residue K45 forms a Glycyl lysine isopeptide (Lys-Gly) (interchain with G-Cter in ubiquitin) linkage. A helical transmembrane segment spans residues 67–87 (AYVTVSICCLMVAFGGFVFGW). Residues 88–122 (DTGTISGFVAQTDFIRRFGMKHHDGTYYLSKVRTG) are Extracellular-facing. Residues 123 to 143 (LIVSIFNIGCAIGGIILARLG) traverse the membrane as a helical segment. At 144 to 149 (DMYGRK) the chain is on the cytoplasmic side. The helical transmembrane segment at 150-170 (MGLIVVVVIYIIGIIIQIASI) threads the bilayer. Over 171–180 (NKWYQYFIGR) the chain is Extracellular. A helical transmembrane segment spans residues 181 to 201 (IISGLGVGGIAVLSPMLISEV). Residues 202–207 (SPKHIR) are Cytoplasmic-facing. A helical membrane pass occupies residues 208-228 (GTLVSCYQLMITLGIFLGYCT). The Extracellular segment spans residues 229–242 (NYGTKTYTNSVQWR). A helical transmembrane segment spans residues 243–263 (VPLGLGFAWALFMIGGMTFVP). Topologically, residues 264–346 (ESPRYLVEVG…IQSLQQLTGD (83 aa)) are cytoplasmic. Residues 347–363 (NYFFYYGTTVFTAVGLE) traverse the membrane as a helical segment. Over 364–369 (DSFETS) the chain is Extracellular. Residues 370 to 387 (IVLGIVNFASTFVGIFLV) form a helical membrane-spanning segment. The Cytoplasmic segment spans residues 388 to 394 (ERYGRRR). The helical transmembrane segment at 395-415 (CLLWGAASMTACMVVFASVGV) threads the bilayer. Residues 416 to 437 (TRLWPNGKKNGSSKGAGNCMIV) are Extracellular-facing. An N-linked (GlcNAc...) asparagine glycan is attached at N425. A helical transmembrane segment spans residues 438-458 (FTCFYLFCFATTWAPIPFVVN). Over 459 to 475 (SETFPLRVKSKCMAIAQ) the chain is Cytoplasmic. Residues 476 to 496 (ACNWIWGFLIGFFTPFISGAI) form a helical membrane-spanning segment. Position 497 (D497) is a topological domain, extracellular. The chain crosses the membrane as a helical span at residues 498 to 518 (FYYGYVFMGCLVFSYFYVFFF). Topologically, residues 519–576 (VPETKGLTLEEVNTLWEEGVLPWKSPSWVPPNKRGTDYNADDLMHDDQPFYKKMFGKK) are cytoplasmic.

This sequence belongs to the major facilitator superfamily. Sugar transporter (TC 2.A.1.1) family.

It is found in the cell membrane. Its activity is regulated as follows. Xylose uptake is strongly inhibited by glucose. Functionally, low-affinity glucose transporter. Can also transport xylose. This Saccharomyces cerevisiae (strain YJM789) (Baker's yeast) protein is Low-affinity glucose transporter HXT4 (HXT4).